A 179-amino-acid polypeptide reads, in one-letter code: Large ribosomal subunit protein uL5 (179 aa).

Belongs to the universal ribosomal protein uL5 family. As to quaternary structure, part of the 50S ribosomal subunit; part of the 5S rRNA/L5/L18/L25 subcomplex. Contacts the 5S rRNA and the P site tRNA. Forms a bridge to the 30S subunit in the 70S ribosome.

Its function is as follows. This is one of the proteins that bind and probably mediate the attachment of the 5S RNA into the large ribosomal subunit, where it forms part of the central protuberance. In the 70S ribosome it contacts protein S13 of the 30S subunit (bridge B1b), connecting the 2 subunits; this bridge is implicated in subunit movement. Contacts the P site tRNA; the 5S rRNA and some of its associated proteins might help stabilize positioning of ribosome-bound tRNAs. This is Large ribosomal subunit protein uL5 from Albidiferax ferrireducens (strain ATCC BAA-621 / DSM 15236 / T118) (Rhodoferax ferrireducens).